Consider the following 1115-residue polypeptide: Receptor-type tyrosine-protein phosphatase H (1115 aa).

An N-terminal signal peptide occupies residues 1–27; the sequence is MAGAGGGLGVWGNLVLLGLCSWTGARA. The Extracellular portion of the chain corresponds to 28 to 754; sequence PAPNPGRNLT…VVCHTESAGV (727 aa). Fibronectin type-III domains follow at residues 32 to 121, 122 to 209, 210 to 299, 300 to 387, 388 to 477, 478 to 563, 564 to 666, and 665 to 749; these read PGRN…APNP, VRNL…TAHN, PVRN…APNP, VRNL…TAPN, PVRN…VPNA, VTSL…TAAT, APNE…TYPD, and PDTV…VCHT. N-linked (GlcNAc...) asparagine glycans are attached at residues Asn-35, Asn-83, Asn-172, Asn-256, Asn-285, Asn-350, Asn-434, Asn-468, Asn-556, and Asn-642. The helical transmembrane segment at 755-775 threads the bilayer; the sequence is IAGAFVGILLFLILVGLLIFF. Residues 776–1115 are Cytoplasmic-facing; the sequence is LKRRNKKKQQ…AAIQAHKLEV (340 aa). The 260-residue stretch at 820-1079 folds into the Tyrosine-protein phosphatase domain; the sequence is FADEYQQLSL…VFLHQCILRF (260 aa). Catalysis depends on Cys-1020, which acts as the Phosphocysteine intermediate. Phosphotyrosine is present on residues Tyr-1094 and Tyr-1102.

It belongs to the protein-tyrosine phosphatase family. Receptor class 3 subfamily. In terms of assembly, homodimer; disulfide-linked. Interacts with LCK. Interacts (phosphorylated form) with GRB2 (via SH2 domain). Interacts (phosphorylated form) with FYN (via SH2 domain). Interacts (via extracellular domain) with CEACAM20 (via extracellular domain); the interaction dephosphorylates CEACAM20. In terms of tissue distribution, expressed at high levels in the brain, spleen and liver and at lower levels in the heart and stomach. Expressed in pancreatic and colorectal cancer cells, but not in normal pancreas or colon. Expression in hepatocellular carcinoma is related to the differentiation status of the tumor and expression is inversely related to tumor aggressiveness.

It is found in the cell projection. It localises to the microvillus membrane. The protein localises to the apical cell membrane. Its subcellular location is the cytoplasm. The catalysed reaction is O-phospho-L-tyrosyl-[protein] + H2O = L-tyrosyl-[protein] + phosphate. Its activity is regulated as follows. Regulated by reversible dimerization. Dimerization reduces its catalytic activity. Functionally, protein phosphatase that may contribute to contact inhibition of cell growth and motility by mediating the dephosphorylation of focal adhesion-associated substrates and thus negatively regulating integrin-promoted signaling processes. Induces apoptotic cell death by at least two distinct mechanisms: inhibition of cell survival signaling mediated by PI 3-kinase, Akt, and ILK and activation of a caspase-dependent proapoptotic pathway. Inhibits the basal activity of LCK and its activation in response to TCR stimulation and TCR-induced activation of MAP kinase and surface expression of CD69. Inhibits TCR-induced tyrosine phosphorylation of LAT and ZAP70. Inhibits both basal activity of DOK1 and its CD2-induced tyrosine phosphorylation. Induces dephosphorylation of BCAR1, focal adhesion kinase and SRC. Reduces migratory activity of activity of Jurkat cells. Reduces tyrosine phosphorylation of CEACAM20 and thereby contributes to suppress the intestinal immune response CEACAM20. The chain is Receptor-type tyrosine-protein phosphatase H (PTPRH) from Homo sapiens (Human).